The following is a 322-amino-acid chain: Corticotropin-releasing factor-binding protein (322 aa).

Positions 1–24 (MSPNFKLQCHFTLILLTALRGESR) are cleaved as a signal peptide. Intrachain disulfides connect Cys-60–Cys-81, Cys-104–Cys-141, Cys-183–Cys-205, Cys-237–Cys-264, and Cys-277–Cys-318. Asn-204 carries N-linked (GlcNAc...) asparagine glycosylation.

The protein belongs to the CRF-binding protein family.

The protein localises to the secreted. In terms of biological role, binds CRF and inactivates it. May prevent inappropriate pituitary-adrenal stimulation in pregnancy. This Rattus norvegicus (Rat) protein is Corticotropin-releasing factor-binding protein (Crhbp).